A 142-amino-acid chain; its full sequence is Large ribosomal subunit protein mL42 (142 aa).

The transit peptide at 1–31 (MAAAVKWAISNRTIWKHLLPIQNGALSSACH) directs the protein to the mitochondrion.

It belongs to the mitochondrion-specific ribosomal protein mL42 family. As to quaternary structure, component of the mitochondrial ribosome large subunit (39S) which comprises a 16S rRNA and about 50 distinct proteins. Component of the mitochondrial ribosome small subunit (28S) which comprises a 12S rRNA and about 30 distinct proteins.

It is found in the mitochondrion. This chain is Large ribosomal subunit protein mL42 (Mrpl42), found in Mus musculus (Mouse).